A 116-amino-acid chain; its full sequence is Nitrogenase-stabilizing/protective protein NifW (116 aa).

It belongs to the NifW family. In terms of assembly, homotrimer; associates with NifD.

May protect the nitrogenase Fe-Mo protein from oxidative damage. In Rhodopseudomonas palustris (strain ATCC BAA-98 / CGA009), this protein is Nitrogenase-stabilizing/protective protein NifW.